Reading from the N-terminus, the 389-residue chain is Meiosis-specific protein MEI4 (389 aa).

Residues M1–D127 are interaction with REC114.

It belongs to the MEI4L family. As to quaternary structure, part of the MCD recombinosome complex, at least composed of IHO1, REC114 and MEI4. Forms a complex with REC114; the interaction is required for MEI4 stability. Interacts (via N-terminal domain) with REC114 (via C-terminal domain). Interacts with IHO1. In terms of tissue distribution, expressed in adult testis and brain and in embryonic ovary.

The protein localises to the chromosome. In terms of biological role, required for DNA double-strand breaks (DSBs) formation in unsynapsed regions during meiotic recombination. Probably acts by forming a complex with IHO1 and REC114, which activates DSBs formation in unsynapsed regions, an essential step to ensure completion of synapsis. The polypeptide is Meiosis-specific protein MEI4 (Mus musculus (Mouse)).